Consider the following 62-residue polypeptide: Alpha-elapitoxin-Pc1 (62 aa).

Intrachain disulfides connect Cys3–Cys24, Cys17–Cys41, Cys43–Cys54, and Cys55–Cys60.

Belongs to the three-finger toxin family. Short-chain subfamily. Type I alpha-neurotoxin sub-subfamily. As to expression, expressed by the venom gland.

The protein localises to the secreted. Its function is as follows. Bird-specific neurotoxin (tested on chicken) that acts as pseudo-irreversible antagonists at the nicotinic acetylcholine receptor (nAChR) of the skeletal neuromuscular junction. Has no significant effect on the electrically-induced twitches of the rat isolated phrenic nerve-diaphragm preparation. The chain is Alpha-elapitoxin-Pc1 from Pseudechis colletti (Collett's snake).